The sequence spans 397 residues: Argininosuccinate synthase (397 aa).

9-17 (AYSGGLDTS) lines the ATP pocket. Y86 is an L-citrulline binding site. Residue G116 coordinates ATP. L-aspartate is bound by residues T118, N122, and D123. N122 is an L-citrulline binding site. The L-citrulline site is built by R126, S174, E259, and Y271.

This sequence belongs to the argininosuccinate synthase family. Type 1 subfamily. As to quaternary structure, homotetramer.

Its subcellular location is the cytoplasm. The catalysed reaction is L-citrulline + L-aspartate + ATP = 2-(N(omega)-L-arginino)succinate + AMP + diphosphate + H(+). It participates in amino-acid biosynthesis; L-arginine biosynthesis; L-arginine from L-ornithine and carbamoyl phosphate: step 2/3. In Lactococcus lactis subsp. cremoris (strain MG1363), this protein is Argininosuccinate synthase.